The following is a 476-amino-acid chain: MVADIAYLQQSQQEINQLEALFARQRAAYLAQPMPDATQRVQWLKALRDLLFKEQQALIEAIDRDFSARSADETLLAEIMPSLHGIHYAAKRVKKWMKPARRAVGLQFQPASAQVVYQPLGVVGVIVPWNYPLFLSIGPLTGALAAGNRVMIKMSESTPATGRLLKDLLARIFPEDQVAVVLGEVDVGVAFSKLPFDHLLFTGATSVGKHVMRAAAENLTPVTLELGGKSPAIVSDSVPMKDAAERIAFGKSLNAGQTCVAPDYVLVPSRRVEEFVSQYKEVVQGFFPRLSDNPDYTAIINERQLGRLRGYLDDAREKGATLVPLFAEGQQRRLPQTLLLNVSDDMKVMQEEIFGPLLPVIPYERLEDALAYVNQRPRPLALYYFGYDKAQQQRVLHETHSGGVCLNDTLLHVAQDDIPFGGVGPSGMGHYHGHEGFLTFSKAKGVFSKPRFNAARMIYPPYGKSIQKLVYKLFVR.

Active-site residues include Glu225 and Cys259.

The protein belongs to the aldehyde dehydrogenase family. In terms of assembly, homodimer.

It carries out the reaction (E)-coniferaldehyde + NADP(+) + H2O = (E)-ferulate + NADPH + 2 H(+). The catalysed reaction is (E)-coniferaldehyde + NAD(+) + H2O = (E)-ferulate + NADH + 2 H(+). In Pseudomonas aeruginosa (strain ATCC 15692 / DSM 22644 / CIP 104116 / JCM 14847 / LMG 12228 / 1C / PRS 101 / PAO1), this protein is Probable coniferyl aldehyde dehydrogenase (calB).